Consider the following 449-residue polypeptide: Glucose-6-phosphate isomerase (449 aa).

The active-site Proton donor is Glu-290. Residues His-311 and Lys-425 contribute to the active site.

Belongs to the GPI family.

The protein resides in the cytoplasm. The catalysed reaction is alpha-D-glucose 6-phosphate = beta-D-fructose 6-phosphate. The protein operates within carbohydrate biosynthesis; gluconeogenesis. It functions in the pathway carbohydrate degradation; glycolysis; D-glyceraldehyde 3-phosphate and glycerone phosphate from D-glucose: step 2/4. Functionally, catalyzes the reversible isomerization of glucose-6-phosphate to fructose-6-phosphate. This chain is Glucose-6-phosphate isomerase, found in Clostridioides difficile (strain 630) (Peptoclostridium difficile).